The following is a 798-amino-acid chain: Acetamidase regulatory protein (798 aa).

Residues cysteine 20–cysteine 50 constitute a DNA-binding region (zn(2)-C6 fungal-type). Disordered regions lie at residues valine 68–alanine 96, alanine 115–alanine 172, and leucine 632–alanine 714. 2 stretches are compositionally biased toward low complexity: residues lysine 82–proline 94 and threonine 133–asparagine 147. Positions leucine 632 to arginine 641 are enriched in basic and acidic residues. Over residues serine 644–glycine 663 the composition is skewed to polar residues. Residues proline 678–glutamine 687 show a composition bias toward pro residues.

Its subcellular location is the nucleus. Positively regulates the expression of 5 genes involved in the catabolism of certain amides (amdS), omega amino acids (gatA and gabA), and lactams (lamA and lamB) in the presence of omega amino acid inducers. The protein is Acetamidase regulatory protein (amdR) of Emericella nidulans (strain FGSC A4 / ATCC 38163 / CBS 112.46 / NRRL 194 / M139) (Aspergillus nidulans).